The chain runs to 432 residues: Serine--tRNA ligase (432 aa).

237–239 contributes to the L-serine binding site; it reads TSE. 268-270 provides a ligand contact to ATP; it reads RSE. Glutamate 291 lines the L-serine pocket. 355–358 lines the ATP pocket; sequence EISS. Serine 390 contributes to the L-serine binding site.

It belongs to the class-II aminoacyl-tRNA synthetase family. Type-1 seryl-tRNA synthetase subfamily. In terms of assembly, homodimer. The tRNA molecule binds across the dimer.

It localises to the cytoplasm. It catalyses the reaction tRNA(Ser) + L-serine + ATP = L-seryl-tRNA(Ser) + AMP + diphosphate + H(+). The catalysed reaction is tRNA(Sec) + L-serine + ATP = L-seryl-tRNA(Sec) + AMP + diphosphate + H(+). The protein operates within aminoacyl-tRNA biosynthesis; selenocysteinyl-tRNA(Sec) biosynthesis; L-seryl-tRNA(Sec) from L-serine and tRNA(Sec): step 1/1. Its function is as follows. Catalyzes the attachment of serine to tRNA(Ser). Is also able to aminoacylate tRNA(Sec) with serine, to form the misacylated tRNA L-seryl-tRNA(Sec), which will be further converted into selenocysteinyl-tRNA(Sec). In Methylobacillus flagellatus (strain ATCC 51484 / DSM 6875 / VKM B-1610 / KT), this protein is Serine--tRNA ligase.